Consider the following 524-residue polypeptide: Thioredoxin reductase 2, mitochondrial (524 aa).

The transit peptide at 1–36 (MAAMAVALRGLGGRFRWRTQAVAGGVRGAARGAAAG) directs the protein to the mitochondrion. 41–70 (DLLVVGGGSGGLACAKEAAQLGRKVAVVDY) lines the FAD pocket. Cysteine 86 and cysteine 91 are oxidised to a cystine. N6-succinyllysine occurs at positions 175 and 329. Catalysis depends on histidine 497, which acts as the Proton acceptor. A cross-link (cysteinyl-selenocysteine (Cys-Sec)) is located at residues 522-523 (CU). Residue selenocysteine 523 is a non-standard amino acid, selenocysteine.

The protein belongs to the class-I pyridine nucleotide-disulfide oxidoreductase family. As to quaternary structure, homodimer. Requires FAD as cofactor. In terms of tissue distribution, highly expressed in the prostate, ovary, liver, testis, uterus, colon and small intestine. Intermediate levels in brain, skeletal muscle, heart and spleen. Low levels in placenta, pancreas, thymus and peripheral blood leukocytes. According to PubMed:10608886, high levels in kidney, whereas according to PubMed:9923614, levels are low. High expression is observed in the adrenal cortex.

It localises to the mitochondrion. It carries out the reaction [thioredoxin]-dithiol + NADP(+) = [thioredoxin]-disulfide + NADPH + H(+). Its function is as follows. Involved in the control of reactive oxygen species levels and the regulation of mitochondrial redox homeostasis. Maintains thioredoxin in a reduced state. May play a role in redox-regulated cell signaling. The protein is Thioredoxin reductase 2, mitochondrial of Homo sapiens (Human).